A 711-amino-acid polypeptide reads, in one-letter code: Interferon-induced GTP-binding protein Mx2 (711 aa).

One can recognise a Dynamin-type G domain in the interval 115-387 (DLALPAIAVI…LILHINKSLP (273 aa)). The tract at residues 125–132 (GDQSSGKS) is G1 motif. 125-132 (GDQSSGKS) lines the GTP pocket. Residues 150–152 (VTR) are G2 motif. Residues 225 to 228 (DLPG) form a G3 motif region. GTP contacts are provided by residues 225-229 (DLPGI) and 294-297 (TKPD). The tract at residues 294 to 297 (TKPD) is G4 motif. The G5 motif stretch occupies residues 326 to 329 (RCRG). One can recognise a GED domain in the interval 623–711 (NDEIGVHLNA…ARRALYMFFS (89 aa)).

This sequence belongs to the TRAFAC class dynamin-like GTPase superfamily. Dynamin/Fzo/YdjA family.

It localises to the cytoplasm. Its subcellular location is the nucleus. Interferon-induced dynamin-like GTPase with antiviral activity against vesicular stomatitis virus (VSV). This Canis lupus familiaris (Dog) protein is Interferon-induced GTP-binding protein Mx2 (MX2).